The primary structure comprises 316 residues: MSIHPQLNKNGELQHLLTTEGLPVTILRHILDTAESFTGVTERDVKKIPLLRGKSVFNLFFEPSTRTRTTFEIAAKRLSADVINLSMAVSSQTKGETLLDTVNNLSAMHADMFVVRHNQSGAAHLIARHVGPEIHVINAGDGWHAHPTQALLDMFTIRRYKQDFHTLRVAIIGDILHSRVARSQIHALTTLGVPEIRVIAPKTLLPARVERLGVHVYHNMTQGLKDVDVLMMLRLQHERMESAHLPSTEEYFKYYGLTPGKLLLARSDAIVMHPGPMNRGVEIDSEVADGSQSVILPQVGFGIAVRMAVMSILAGN.

Residues arginine 66 and threonine 67 each contribute to the carbamoyl phosphate site. An L-aspartate-binding site is contributed by lysine 94. Residues arginine 116, histidine 146, and glutamine 149 each coordinate carbamoyl phosphate. Residues arginine 179 and arginine 234 each contribute to the L-aspartate site. Carbamoyl phosphate-binding residues include glycine 275 and proline 276.

The protein belongs to the aspartate/ornithine carbamoyltransferase superfamily. ATCase family. In terms of assembly, heterododecamer (2C3:3R2) of six catalytic PyrB chains organized as two trimers (C3), and six regulatory PyrI chains organized as three dimers (R2).

It carries out the reaction carbamoyl phosphate + L-aspartate = N-carbamoyl-L-aspartate + phosphate + H(+). It functions in the pathway pyrimidine metabolism; UMP biosynthesis via de novo pathway; (S)-dihydroorotate from bicarbonate: step 2/3. Its function is as follows. Catalyzes the condensation of carbamoyl phosphate and aspartate to form carbamoyl aspartate and inorganic phosphate, the committed step in the de novo pyrimidine nucleotide biosynthesis pathway. This is Aspartate carbamoyltransferase catalytic subunit from Nitrosomonas eutropha (strain DSM 101675 / C91 / Nm57).